The sequence spans 717 residues: Adhesion cell surface protein MAD1 (717 aa).

The signal sequence occupies residues 1 to 19 (MKSALSVVVAAAGVQQASA). Low complexity-rich tracts occupy residues 237–254 (TPVTTLQTYTTPSQQTTT) and 262–274 (SKETTTSAQQTTP). Disordered regions lie at residues 237 to 392 (TPVT…ATTT) and 451 to 506 (RTQS…TPPC). 8 tandem repeats follow at residues 275–286 (GKETTPAQQTTP), 287–298 (SKETTPVQQTTS), 299–310 (GKETTPAQQTTP), 311–328 (GKETTSSQETTSAHQTTP), 329–340 (GKETTPAQQTTP), 341–352 (GKETTPAQQTTP), 353–364 (GKETTPAQQTTP), and 365–376 (GKETTPAQQTTP). The segment covering 275–366 (GKETTPAQQT…TPAQQTTPGK (92 aa)) has biased composition (polar residues). Low complexity-rich tracts occupy residues 368-392 (TTPAQQTTPGQQTTPSQPTTAATTT) and 484-503 (QPTGEKPNPVTSQPPQSTQT). One can recognise a CFEM domain in the interval 481–595 (TPEQPTGEKP…TQIITVTGTP (115 aa)). Cystine bridges form between Cys-513–Cys-546, Cys-524–Cys-532, and Cys-534–Cys-568. Asp-529 serves as a coordination point for heme. Residue Asn-614 is glycosylated (N-linked (GlcNAc...) asparagine). Residues 632–690 (PTPTGGVPNQPPATASVPAGQNPPPVTGQNPPPAVTDQSPPPAITTGTGGVIPPKPTGS) are disordered. The span at 652-674 (QNPPPVTGQNPPPAVTDQSPPPA) shows a compositional bias: pro residues. Ala-695 is lipidated: GPI-anchor amidated alanine. A propeptide spans 696–717 (GSGRVGAGLGMVLAVAAFVAAL) (removed in mature form).

It belongs to the RBT5 family. In terms of processing, the GPI-anchor is attached to the protein in the endoplasmic reticulum and serves to target the protein to the cell surface. There, the glucosamine-inositol phospholipid moiety is cleaved off and the GPI-modified mannoprotein is covalently attached via its lipidless GPI glycan remnant to the 1,6-beta-glucan of the outer cell wall layer.

It is found in the secreted. The protein localises to the cell wall. The protein resides in the cell membrane. Cell surface adhesion protein that plays a key role in virulence by allowing adherence to the insect host surface. Required to orientate the cytoskeleton and stimulate the expression of genes involved in the cell cycle. Is also involved in achieving the septin hourglass shape and subsequent separation of cells. The sequence is that of Adhesion cell surface protein MAD1 from Metarhizium anisopliae (Entomophthora anisopliae).